Reading from the N-terminus, the 278-residue chain is Probable aquaporin PIP2-8 (278 aa).

N-acetylmethionine is present on Met-1. Residues 1–36 lie on the Cytoplasmic side of the membrane; it reads MSKEVSEEGRHGKDYVDPPPAPLLDMAELKLWSFYR. Residue Lys-3 is modified to N6,N6-dimethyllysine. The helical transmembrane segment at 37–57 threads the bilayer; that stretch reads AIIAEFIATLLFLYVTVATVI. Topologically, residues 58–74 are extracellular; sequence GHKNQTGPCGGVGLLGI. A helical membrane pass occupies residues 75-95; sequence AWAFGGMIFVLVYCTAGISGG. Over 96–116 the chain is Cytoplasmic; it reads HINPAVTFGLFLARKVSLPRA. The NPA 1 signature appears at 98-100; that stretch reads NPA. Residues 117–137 form a helical membrane-spanning segment; that stretch reads VAYMVAQCLGAICGVGLVKAF. Over 138–158 the chain is Extracellular; the sequence is MMTPYKRLGGGANTVADGYST. Residues 159–179 form a helical membrane-spanning segment; the sequence is GTALGAEIIGTFVLVYTVFSA. The Cytoplasmic portion of the chain corresponds to 180–192; the sequence is TDPKRSARDSHVP. The chain crosses the membrane as a helical span at residues 193–213; it reads VLAPLPIGFAVFMVHLATIPI. Topologically, residues 214–240 are extracellular; that stretch reads TGTGINPARSFGAAVIYNNEKAWDDHW. An NPA 2 motif is present at residues 219–221; sequence NPA. The helical transmembrane segment at 241-261 threads the bilayer; sequence IFWVGPFVGALAAAAYHQYIL. The Cytoplasmic segment spans residues 262-278; the sequence is RAAAIKALASFRSNPTN. A phosphoserine mark is found at Ser-271 and Ser-274.

This sequence belongs to the MIP/aquaporin (TC 1.A.8) family. PIP (TC 1.A.8.11) subfamily. As to expression, expressed in roots and floral buds.

Its subcellular location is the cell membrane. Functionally, aquaporins facilitate the transport of water and small neutral solutes across cell membranes. In Arabidopsis thaliana (Mouse-ear cress), this protein is Probable aquaporin PIP2-8 (PIP2-8).